The primary structure comprises 260 residues: Na(+)-translocating NADH-quinone reductase subunit C (260 aa).

The chain crosses the membrane as a helical span at residues 12–32 (LLVIILLSLACSIIVAGSAVL). At Thr-226 the chain carries FMN phosphoryl threonine.

Belongs to the NqrC family. As to quaternary structure, composed of six subunits; NqrA, NqrB, NqrC, NqrD, NqrE and NqrF. The cofactor is FMN.

The protein resides in the cell inner membrane. It carries out the reaction a ubiquinone + n Na(+)(in) + NADH + H(+) = a ubiquinol + n Na(+)(out) + NAD(+). Its function is as follows. NQR complex catalyzes the reduction of ubiquinone-1 to ubiquinol by two successive reactions, coupled with the transport of Na(+) ions from the cytoplasm to the periplasm. NqrA to NqrE are probably involved in the second step, the conversion of ubisemiquinone to ubiquinol. This Pasteurella multocida (strain Pm70) protein is Na(+)-translocating NADH-quinone reductase subunit C.